The sequence spans 718 residues: Protein Hook homolog 3 (718 aa).

Met1 is subject to N-acetylmethionine. The tract at residues 1–164 is sufficient for interaction with microtubules; it reads MFSVESLERA…QELMSKESPV (164 aa). A phosphoserine mark is found at Ser3 and Ser6. A Calponin-homology (CH) domain is found at 10-126; the sequence is AELCESLLTW…RMLQLILGCA (117 aa). Coiled coils occupy residues 167–433 and 462–667; these read GNDA…VQAQ and EIRE…YIVS. Ser238 bears the Phosphoserine mark. Residues 553 to 718 form a required for association with Golgi region; that stretch reads EKLHEANNEL…PGHVQPATAR (166 aa). The interval 556–718 is required for interaction with MSR1; sequence HEANNELQKK…PGHVQPATAR (163 aa). Residues 682–718 are disordered; the sequence is EDRLASTGSGQSFLARQRQATSSRRSYPGHVQPATAR. Ser693 and Ser707 each carry phosphoserine. Over residues 696–707 the composition is skewed to low complexity; sequence ARQRQATSSRRS.

Belongs to the hook family. Self-associates. Component of the FTS/Hook/FHIP complex (FHF complex), composed of AKTIP/FTS, FHIP1B, and one or more members of the Hook family of proteins HOOK1, HOOK2, and HOOK3. May interact directly with AKTIP/FTS, HOOK1 and HOOK2. Associates with several subunits of the homotypic vesicular sorting complex (the HOPS complex) including VPS16 and VPS41; these interactions may be indirect. Interacts with MSR1, and this association is stimulated by ligand binding to MSR1. Interacts with microtubules. Part of a tripartite complex with dynein and dynactin, acts an adapter linking the dynein motor complex and dynactin. Interacts with dynein intermediate chain and dynactin (DCTN1). Interacts with CCDC181. Interacts with LRGUK. In terms of assembly, (Microbial infection) Interacts with Salmonella typhimurium spiC.

Its subcellular location is the cytoplasm. It localises to the cytoskeleton. It is found in the golgi apparatus. Its function is as follows. Acts as an adapter protein linking the dynein motor complex to various cargos and converts dynein from a non-processive to a highly processive motor in the presence of dynactin. Facilitates the interaction between dynein and dynactin and activates dynein processivity (the ability to move along a microtubule for a long distance without falling off the track). Predominantly recruits 2 dyneins, which increases both the force and speed of the microtubule motor. Component of the FTS/Hook/FHIP complex (FHF complex). The FHF complex may function to promote vesicle trafficking and/or fusion via the homotypic vesicular protein sorting complex (the HOPS complex). May regulate clearance of endocytosed receptors such as MSR1. Participates in defining the architecture and localization of the Golgi complex. FHF complex promotes the distribution of AP-4 complex to the perinuclear area of the cell. In terms of biological role, (Microbial infection) May serve as a target for the spiC protein from Salmonella typhimurium, which inactivates it, leading to a strong alteration in cellular trafficking. The chain is Protein Hook homolog 3 from Homo sapiens (Human).